Consider the following 375-residue polypeptide: Negative elongation factor E (375 aa).

Residues 7-36 (GLSEEEEALQKKFNKLKKKKKALLALKKQS) are a coiled coil. Residues 30-58 (LALKKQSSSGPASQGGVKRSLSEQPVVDT) are disordered. Position 51 is a phosphoserine (serine 51). Residue lysine 78 forms a Glycyl lysine isopeptide (Lys-Gly) (interchain with G-Cter in SUMO1); alternate linkage. Residue lysine 78 forms a Glycyl lysine isopeptide (Lys-Gly) (interchain with G-Cter in SUMO2); alternate linkage. A disordered region spans residues 79 to 262 (AETKNSGFKR…SDSFPERRAP (184 aa)). A Glycyl lysine isopeptide (Lys-Gly) (interchain with G-Cter in SUMO2) cross-link involves residue lysine 82. The segment covering 90–101 (RTLEGKLKDPEK) has biased composition (basic and acidic residues). Residues serine 113 and serine 115 each carry the phosphoserine modification. A PolyADP-ribosyl glutamic acid modification is found at glutamate 122. Phosphoserine is present on residues serine 131 and serine 139. PolyADP-ribosyl glutamic acid is present on glutamate 151. Low complexity predominate over residues 155–167 (APGAGDGPPRGFD). Glutamate 172 carries the polyADP-ribosyl glutamic acid modification. Serine 179, serine 181, serine 185, and serine 187 each carry phosphoserine. Tandem repeats lie at residues 184–185 (RS), 186–187 (RS), 188–189 (RD), and 190–191 (RS). The tract at residues 184 to 247 (RSRSRDRSHD…RDRDRERDRE (64 aa)) is 32 X 2 AA approximate tandem repeats of R-[DSE]. Residues 186–260 (RSRDRSHDRS…RRSDSFPERR (75 aa)) show a composition bias toward basic and acidic residues. At serine 191 the chain carries Phosphoserine. The 5; approximate repeat unit spans residues 192–193 (HD). Tandem repeats lie at residues 194-195 (RS), 196-197 (RD), 198-199 (RD), and 200-201 (RD). One copy of the 10; approximate repeat lies at 202 to 203 (KE). 7 tandem repeats follow at residues 204–205 (RD), 206–207 (RD), 208–209 (RD), 210–211 (RD), 212–213 (RD), 214–215 (RD), and 216–217 (RD). Residues 218 to 219 (KD) form an 18; approximate repeat. The 19; approximate repeat unit spans residues 220-221 (KD). A run of 4 repeats spans residues 222-223 (RD), 224-225 (RD), 226-227 (RD), and 228-229 (RD). A 24; approximate repeat occupies 230 to 231 (KE). 8 consecutive repeat copies span residues 232-233 (RD), 234-235 (RD), 236-237 (RD), 238-239 (RD), 240-241 (RD), 242-243 (RE), 244-245 (RD), and 246-247 (RE). 2 positions are modified to phosphoserine: serine 253 and serine 255. The region spanning 266 to 336 (NTLYVYGEDM…VQLKVNIARK (71 aa)) is the RRM domain. Residues threonine 276 and threonine 278 each carry the phosphothreonine modification. Serine 285 and serine 357 each carry phosphoserine.

Belongs to the RRM NELF-E family. In terms of assembly, the NELF complex is composed of NELFA, NELFB, NELFCD and NELFE. Interacts with NELFB. Phosphorylated by the P-TEFb complex at sites next to its RNA recognition motif, promoting its release from chromatin. Post-translationally, sumoylated. In terms of processing, poly-ADP-ribosylated by PARP1, thereby preventing RNA-binding and relieving transcription pausing.

It localises to the nucleus. The protein localises to the chromosome. In terms of biological role, essential component of the NELF complex, a complex that negatively regulates the elongation of transcription by RNA polymerase II. The NELF complex, which acts via an association with the DSIF complex and causes transcriptional pausing, is counteracted by the P-TEFb kinase complex. Provides the strongest RNA binding activity of the NELF complex and may initially recruit the NELF complex to RNA. This Mus musculus (Mouse) protein is Negative elongation factor E (Nelfe).